Consider the following 163-residue polypeptide: Inorganic pyrophosphatase (163 aa).

Residues lysine 21, arginine 35, and tyrosine 47 each contribute to the substrate site. Mg(2+) is bound by residues aspartate 57, aspartate 62, and aspartate 94. Tyrosine 131 is a binding site for substrate.

It belongs to the PPase family. In terms of assembly, homohexamer. It depends on Mg(2+) as a cofactor.

The protein localises to the cytoplasm. The catalysed reaction is diphosphate + H2O = 2 phosphate + H(+). In terms of biological role, catalyzes the hydrolysis of inorganic pyrophosphate (PPi) forming two phosphate ions. The polypeptide is Inorganic pyrophosphatase (Halalkalibacterium halodurans (strain ATCC BAA-125 / DSM 18197 / FERM 7344 / JCM 9153 / C-125) (Bacillus halodurans)).